Here is a 424-residue protein sequence, read N- to C-terminus: Glutamyl-tRNA reductase (424 aa).

Substrate-binding positions include Thr-50 to Arg-53, Ser-98, Glu-103 to Gln-105, and Gln-109. The Nucleophile role is filled by Cys-51. Gly-178–Gly-183 lines the NADP(+) pocket.

The protein belongs to the glutamyl-tRNA reductase family. As to quaternary structure, homodimer.

The catalysed reaction is (S)-4-amino-5-oxopentanoate + tRNA(Glu) + NADP(+) = L-glutamyl-tRNA(Glu) + NADPH + H(+). It participates in porphyrin-containing compound metabolism; protoporphyrin-IX biosynthesis; 5-aminolevulinate from L-glutamyl-tRNA(Glu): step 1/2. Its function is as follows. Catalyzes the NADPH-dependent reduction of glutamyl-tRNA(Glu) to glutamate 1-semialdehyde (GSA). The chain is Glutamyl-tRNA reductase from Methanoregula boonei (strain DSM 21154 / JCM 14090 / 6A8).